A 101-amino-acid polypeptide reads, in one-letter code: MAKLSLIEREKKRAKLVAKYAEKRAALEAIVADQSKSEEERYEARLKLQALPRNANPTRQRNRCSITGRPRGTFRKFGLARNKLREIAFKGEIPGLTKASW.

It belongs to the universal ribosomal protein uS14 family. As to quaternary structure, part of the 30S ribosomal subunit. Contacts proteins S3 and S10.

Binds 16S rRNA, required for the assembly of 30S particles and may also be responsible for determining the conformation of the 16S rRNA at the A site. This chain is Small ribosomal subunit protein uS14, found in Ralstonia pickettii (strain 12J).